Consider the following 132-residue polypeptide: ATP synthase epsilon chain 1 (132 aa).

This sequence belongs to the ATPase epsilon chain family. In terms of assembly, F-type ATPases have 2 components, CF(1) - the catalytic core - and CF(0) - the membrane proton channel. CF(1) has five subunits: alpha(3), beta(3), gamma(1), delta(1), epsilon(1). CF(0) has three main subunits: a, b and c.

Its subcellular location is the cell inner membrane. Produces ATP from ADP in the presence of a proton gradient across the membrane. The chain is ATP synthase epsilon chain 1 from Cereibacter sphaeroides (strain ATCC 17023 / DSM 158 / JCM 6121 / CCUG 31486 / LMG 2827 / NBRC 12203 / NCIMB 8253 / ATH 2.4.1.) (Rhodobacter sphaeroides).